The following is a 165-amino-acid chain: 3-isopropylmalate dehydratase small subunit (165 aa).

Belongs to the LeuD family. LeuD type 2 subfamily. Heterodimer of LeuC and LeuD.

The catalysed reaction is (2R,3S)-3-isopropylmalate = (2S)-2-isopropylmalate. Its pathway is amino-acid biosynthesis; L-leucine biosynthesis; L-leucine from 3-methyl-2-oxobutanoate: step 2/4. Functionally, catalyzes the isomerization between 2-isopropylmalate and 3-isopropylmalate, via the formation of 2-isopropylmaleate. The chain is 3-isopropylmalate dehydratase small subunit from Saccharolobus islandicus (strain M.14.25 / Kamchatka #1) (Sulfolobus islandicus).